A 365-amino-acid polypeptide reads, in one-letter code: Galactoside alpha-(1,2)-fucosyltransferase 1 (365 aa).

At 1–8 the chain is on the cytoplasmic side; that stretch reads MWLRSHRQ. Residues 9-25 form a helical; Signal-anchor for type II membrane protein membrane-spanning segment; the sequence is LCLAFLLVCVLSVIFFL. At 26–365 the chain is on the lumenal side; the sequence is HIHQDSFPHG…LSPLWTLAKP (340 aa). 2 N-linked (GlcNAc...) asparagine glycosylation sites follow: Asn-65 and Asn-327.

It belongs to the glycosyltransferase 11 family.

It is found in the golgi apparatus. The protein resides in the golgi stack membrane. It carries out the reaction a beta-D-galactosyl-(1-&gt;4)-N-acetyl-beta-D-glucosaminyl derivative + GDP-beta-L-fucose = an alpha-L-Fuc-(1-&gt;2)-beta-D-Gal-(1-&gt;4)-beta-D-GlcNAc derivative + GDP + H(+). The enzyme catalyses a ganglioside GA1 + GDP-beta-L-fucose = a ganglioside Fuc-GA1 + GDP + H(+). The catalysed reaction is a beta-D-Gal-(1-&gt;3)-beta-D-GlcNAc-(1-&gt;3)-beta-D-Gal-(1-&gt;4)-beta-D-Glc-(1&lt;-&gt;1')-Cer(d18:1(4E)) + GDP-beta-L-fucose = alpha-L-fucosyl-(1-&gt;2)- beta-D-galactosyl-(1-&gt;3)-N-acetyl-beta-D-glucosaminyl-(1-&gt;3)-beta-D-galactosyl-(1-&gt;4)-beta-D-glucosyl-(1&lt;-&gt;1')-N-acylsphing-4-enine + GDP + H(+). It catalyses the reaction a neolactoside nLc4Cer(d18:1(4E)) + GDP-beta-L-fucose = a neolactoside IV(2)-alpha-Fuc-nLc4Cer(d18:1(4E)) + GDP + H(+). It carries out the reaction a ganglioside GM1 + GDP-beta-L-fucose = a ganglioside Fuc-GM1 + GDP + H(+). The enzyme catalyses beta-D-galactosyl-(1-&gt;3)-N-acetyl-D-galactosamine + GDP-beta-L-fucose = alpha-L-fucosyl-(1-&gt;2)-beta-D-galactosyl-(1-&gt;3)-N-acetyl-D-galactosamine + GDP + H(+). Its pathway is protein modification; protein glycosylation. Catalyzes the transfer of L-fucose, from a guanosine diphosphate-beta-L-fucose, to the terminal galactose residue of glycoconjugates through an alpha(1,2) linkage leading to H antigen synthesis that is an intermediate substrate in the synthesis of ABO blood group antigens. H antigen is essential for maturation of the glomerular layer of the main olfactory bulb, in cell migration and early cell-cell contacts during tumor associated angiogenesis. Preferentially fucosylates soluble lactose and to a lesser extent fucosylates glycolipids gangliosides GA1 and GM1a. The polypeptide is Galactoside alpha-(1,2)-fucosyltransferase 1 (Homo sapiens (Human)).